The sequence spans 93 residues: Small ribosomal subunit protein uS19 (93 aa).

The protein belongs to the universal ribosomal protein uS19 family.

Protein S19 forms a complex with S13 that binds strongly to the 16S ribosomal RNA. This is Small ribosomal subunit protein uS19 from Oenococcus oeni (strain ATCC BAA-331 / PSU-1).